The following is a 307-amino-acid chain: Delta-9 acyl-lipid desaturase 2 (307 aa).

The segment covering 1 to 17 (MSVTSTVEENHQKNPST) has biased composition (polar residues). The interval 1 to 21 (MSVTSTVEENHQKNPSTPAAV) is disordered. Residues 53 to 73 (LALLAPFYFTWSALWVTFLFY) traverse the membrane as a helical segment. 2 residues coordinate Fe cation: His-85 and His-90. A Histidine box-1 motif is present at residues 85-90 (HRNLAH). Residues 99-119 (LEYLLAYCALLAIQGDPIDWV) traverse the membrane as a helical segment. Fe cation contacts are provided by His-122, His-125, and His-126. Residues 122–126 (HRYHH) carry the Histidine box-2 motif. 2 consecutive transmembrane segments (helical) span residues 182–202 (VLFH…MSFV) and 204–224 (WGMG…NSLC). Fe cation contacts are provided by His-225, His-254, His-257, and His-258. The short motif at 254–258 (HNNHH) is the Histidine box-3 element.

Belongs to the fatty acid desaturase type 1 family. Fe cation is required as a cofactor. As to expression, strongly expressed in flowers, roots, leaves, seedpods, and inflorescence meristems.

The protein localises to the endoplasmic reticulum membrane. The catalysed reaction is a 1-hexacosanoyl-2-acyl-phosphoglycerolipid + 2 Fe(II)-[cytochrome b5] + O2 + 2 H(+) = a 1-[(17Z)-hexacos-17-enoyl]-2-acyl-phosphoglycerolipid + 2 Fe(III)-[cytochrome b5] + 2 H2O. The enzyme catalyses a 1-tetracosanoyl-2-acyl-phosphoglycerolipid + 2 Fe(II)-[cytochrome b5] + O2 + 2 H(+) = a 1-[(15Z)-tetracos-15-enoyl]-2-acyl-phosphoglycerolipid + 2 Fe(III)-[cytochrome b5] + 2 H2O. The protein operates within lipid metabolism; polyunsaturated fatty acid biosynthesis. Its function is as follows. Involved in delta-9 desaturation of fatty acids. Plays a role in the production of very-long-chain monounsaturated fatty acids (VLCMUFAs) in seed lipids and in membrane phospholipids and sphingolipids. Acts as C-16:0 desaturase for monogalactosyl diacylglycerol (MGDG) and phosphatidylglycerol (PG). Is an essential component for cold adaptation. Is essential to adjust the acyl composition of organelle membrane lipid composition in response to cold stress. The polypeptide is Delta-9 acyl-lipid desaturase 2 (Arabidopsis thaliana (Mouse-ear cress)).